Reading from the N-terminus, the 426-residue chain is Serine--tRNA ligase (426 aa).

L-serine is bound at residue 233–235 (TAE). 264–266 (RSE) contributes to the ATP binding site. Glu-287 is a binding site for L-serine. 351–354 (EISS) is an ATP binding site. Ser-387 lines the L-serine pocket.

Belongs to the class-II aminoacyl-tRNA synthetase family. Type-1 seryl-tRNA synthetase subfamily. In terms of assembly, homodimer. The tRNA molecule binds across the dimer.

It localises to the cytoplasm. The catalysed reaction is tRNA(Ser) + L-serine + ATP = L-seryl-tRNA(Ser) + AMP + diphosphate + H(+). It carries out the reaction tRNA(Sec) + L-serine + ATP = L-seryl-tRNA(Sec) + AMP + diphosphate + H(+). It functions in the pathway aminoacyl-tRNA biosynthesis; selenocysteinyl-tRNA(Sec) biosynthesis; L-seryl-tRNA(Sec) from L-serine and tRNA(Sec): step 1/1. Its function is as follows. Catalyzes the attachment of serine to tRNA(Ser). Is also able to aminoacylate tRNA(Sec) with serine, to form the misacylated tRNA L-seryl-tRNA(Sec), which will be further converted into selenocysteinyl-tRNA(Sec). This is Serine--tRNA ligase from Pseudomonas putida (strain ATCC 47054 / DSM 6125 / CFBP 8728 / NCIMB 11950 / KT2440).